A 568-amino-acid chain; its full sequence is Proline--tRNA ligase (568 aa).

The protein belongs to the class-II aminoacyl-tRNA synthetase family. ProS type 1 subfamily. Homodimer.

Its subcellular location is the cytoplasm. The catalysed reaction is tRNA(Pro) + L-proline + ATP = L-prolyl-tRNA(Pro) + AMP + diphosphate. Functionally, catalyzes the attachment of proline to tRNA(Pro) in a two-step reaction: proline is first activated by ATP to form Pro-AMP and then transferred to the acceptor end of tRNA(Pro). As ProRS can inadvertently accommodate and process non-cognate amino acids such as alanine and cysteine, to avoid such errors it has two additional distinct editing activities against alanine. One activity is designated as 'pretransfer' editing and involves the tRNA(Pro)-independent hydrolysis of activated Ala-AMP. The other activity is designated 'posttransfer' editing and involves deacylation of mischarged Ala-tRNA(Pro). The misacylated Cys-tRNA(Pro) is not edited by ProRS. This is Proline--tRNA ligase from Listeria monocytogenes serotype 4a (strain HCC23).